The chain runs to 349 residues: tRNA pseudouridine synthase D (349 aa).

Phe-26 provides a ligand contact to substrate. The active-site Nucleophile is the Asp-79. Asn-128 lines the substrate pocket. In terms of domain architecture, TRUD spans 154–302 (GVPNYFGSQR…VEGSRRAVLL (149 aa)). Phe-328 contacts substrate.

This sequence belongs to the pseudouridine synthase TruD family.

It carries out the reaction uridine(13) in tRNA = pseudouridine(13) in tRNA. Functionally, responsible for synthesis of pseudouridine from uracil-13 in transfer RNAs. This chain is tRNA pseudouridine synthase D, found in Yersinia pseudotuberculosis serotype IB (strain PB1/+).